The sequence spans 382 residues: Chaperone protein DnaJ (382 aa).

Residues 5-70 form the J domain; that stretch reads DYYEVLGLQK…QKRAAYDQYG (66 aa). The CR-type zinc finger occupies 134–212; sequence GTTKDIQINT…CHGEGRVHKK (79 aa). Zn(2+) is bound by residues Cys-147, Cys-150, Cys-164, Cys-167, Cys-186, Cys-189, Cys-200, and Cys-203. CXXCXGXG motif repeat units lie at residues 147–154, 164–171, 186–193, and 200–207; these read CDSCGGSG, CPHCHGSG, CPTCHGSG, and CRNCHGEG.

The protein belongs to the DnaJ family. Homodimer. It depends on Zn(2+) as a cofactor.

Its subcellular location is the cytoplasm. Its function is as follows. Participates actively in the response to hyperosmotic and heat shock by preventing the aggregation of stress-denatured proteins and by disaggregating proteins, also in an autonomous, DnaK-independent fashion. Unfolded proteins bind initially to DnaJ; upon interaction with the DnaJ-bound protein, DnaK hydrolyzes its bound ATP, resulting in the formation of a stable complex. GrpE releases ADP from DnaK; ATP binding to DnaK triggers the release of the substrate protein, thus completing the reaction cycle. Several rounds of ATP-dependent interactions between DnaJ, DnaK and GrpE are required for fully efficient folding. Also involved, together with DnaK and GrpE, in the DNA replication of plasmids through activation of initiation proteins. The polypeptide is Chaperone protein DnaJ (Haemophilus influenzae (strain ATCC 51907 / DSM 11121 / KW20 / Rd)).